Consider the following 596-residue polypeptide: Cysteine--tRNA ligase (596 aa).

Residues 1–199 (MKSKTFLEKN…SQRYFEELRK (199 aa)) form a unknown region. Zn(2+) is bound at residue Cys212. The 'HIGH' region signature appears at 214–224 (PTVYDEVHIGN). Zn(2+)-binding residues include Cys377, His403, and Glu407. The short motif at 435–439 (KMSKS) is the 'KMSKS' region element. Lys438 provides a ligand contact to ATP.

This sequence belongs to the class-I aminoacyl-tRNA synthetase family. As to quaternary structure, monomer. It depends on Zn(2+) as a cofactor.

It is found in the cytoplasm. The catalysed reaction is tRNA(Cys) + L-cysteine + ATP = L-cysteinyl-tRNA(Cys) + AMP + diphosphate. This chain is Cysteine--tRNA ligase (cysS), found in Mycoplasmopsis pulmonis (strain UAB CTIP) (Mycoplasma pulmonis).